We begin with the raw amino-acid sequence, 333 residues long: Gap junction alpha-4 protein (333 aa).

Residues 1-20 (MGDWGFLEKLLDQVQEHSTV) are Cytoplasmic-facing. The chain crosses the membrane as a helical span at residues 21 to 40 (VGKIWLTVLFIFRILILGLA). Residues 41-76 (GESVWGDEQSDFECNTAQPGCTNVCYDQAFPISHIR) are Extracellular-facing. The chain crosses the membrane as a helical span at residues 77–99 (YWVLQFLFVSTPTLVYLGHVIYL). The Cytoplasmic portion of the chain corresponds to 100 to 148 (SRREERLRQKEGELRALPAKDPRVERALASIERQMAKISVAEDGHLRIR). Residues 149–165 (GALMGTYVASVLCKSVL) traverse the membrane as a helical segment. Over 166–207 (EAGFLYGQWRLYGWTMEPVFVCQRSPCPYLVDCFVSRPTEKT) the chain is Extracellular. Residues 208 to 230 (IFIIFMLVVGLISLVLNLLELAY) form a helical membrane-spanning segment. Topologically, residues 231–333 (LLCRCLSRGV…SSSASKKQYV (103 aa)) are cytoplasmic. Positions 303-333 (SRAPLFLDPPPQTGRKSPSRPSSSASKKQYV) are disordered. Over residues 317–333 (RKSPSRPSSSASKKQYV) the composition is skewed to low complexity.

This sequence belongs to the connexin family. Alpha-type (group II) subfamily. A connexon is composed of a hexamer of connexins.

The protein resides in the cell membrane. It localises to the cell junction. The protein localises to the gap junction. One gap junction consists of a cluster of closely packed pairs of transmembrane channels, the connexons, through which materials of low MW diffuse from one cell to a neighboring cell. This is Gap junction alpha-4 protein (GJA4) from Bos taurus (Bovine).